Here is a 556-residue protein sequence, read N- to C-terminus: 2-succinyl-5-enolpyruvyl-6-hydroxy-3-cyclohexene-1-carboxylate synthase (556 aa).

Belongs to the TPP enzyme family. MenD subfamily. As to quaternary structure, homodimer. It depends on Mg(2+) as a cofactor. Requires Mn(2+) as cofactor. The cofactor is thiamine diphosphate.

The catalysed reaction is isochorismate + 2-oxoglutarate + H(+) = 5-enolpyruvoyl-6-hydroxy-2-succinyl-cyclohex-3-ene-1-carboxylate + CO2. The protein operates within quinol/quinone metabolism; 1,4-dihydroxy-2-naphthoate biosynthesis; 1,4-dihydroxy-2-naphthoate from chorismate: step 2/7. It functions in the pathway quinol/quinone metabolism; menaquinone biosynthesis. In terms of biological role, catalyzes the thiamine diphosphate-dependent decarboxylation of 2-oxoglutarate and the subsequent addition of the resulting succinic semialdehyde-thiamine pyrophosphate anion to isochorismate to yield 2-succinyl-5-enolpyruvyl-6-hydroxy-3-cyclohexene-1-carboxylate (SEPHCHC). The protein is 2-succinyl-5-enolpyruvyl-6-hydroxy-3-cyclohexene-1-carboxylate synthase of Salmonella gallinarum (strain 287/91 / NCTC 13346).